Reading from the N-terminus, the 332-residue chain is L-lactate dehydrogenase A chain (332 aa).

Residues 29-57 (GMVGMASAISILLKDLCDELALVDVMEDK) and Arg-99 each bind NAD(+). Arg-106, Asn-138, and Arg-169 together coordinate substrate. NAD(+) is bound at residue Asn-138. His-193 (proton acceptor) is an active-site residue. Residue Thr-248 coordinates substrate.

Belongs to the LDH/MDH superfamily. LDH family. In terms of assembly, homotetramer.

It localises to the cytoplasm. It catalyses the reaction (S)-lactate + NAD(+) = pyruvate + NADH + H(+). It participates in fermentation; pyruvate fermentation to lactate; (S)-lactate from pyruvate: step 1/1. Interconverts simultaneously and stereospecifically pyruvate and lactate with concomitant interconversion of NADH and NAD(+). The protein is L-lactate dehydrogenase A chain (ldha) of Gillichthys seta (Shortjaw mudsucker).